Reading from the N-terminus, the 527-residue chain is Glutamate--cysteine ligase (527 aa).

It belongs to the glutamate--cysteine ligase type 1 family. Type 1 subfamily.

It carries out the reaction L-cysteine + L-glutamate + ATP = gamma-L-glutamyl-L-cysteine + ADP + phosphate + H(+). It participates in sulfur metabolism; glutathione biosynthesis; glutathione from L-cysteine and L-glutamate: step 1/2. The sequence is that of Glutamate--cysteine ligase from Pseudomonas paraeruginosa (strain DSM 24068 / PA7) (Pseudomonas aeruginosa (strain PA7)).